The sequence spans 162 residues: Crossover junction endodeoxyribonuclease RuvC (162 aa).

Residues D7, E67, and D140 contribute to the active site. Residues D7, E67, and D140 each coordinate Mg(2+).

The protein belongs to the RuvC family. As to quaternary structure, homodimer which binds Holliday junction (HJ) DNA. The HJ becomes 2-fold symmetrical on binding to RuvC with unstacked arms; it has a different conformation from HJ DNA in complex with RuvA. In the full resolvosome a probable DNA-RuvA(4)-RuvB(12)-RuvC(2) complex forms which resolves the HJ. Mg(2+) serves as cofactor.

It is found in the cytoplasm. It catalyses the reaction Endonucleolytic cleavage at a junction such as a reciprocal single-stranded crossover between two homologous DNA duplexes (Holliday junction).. The RuvA-RuvB-RuvC complex processes Holliday junction (HJ) DNA during genetic recombination and DNA repair. Endonuclease that resolves HJ intermediates. Cleaves cruciform DNA by making single-stranded nicks across the HJ at symmetrical positions within the homologous arms, yielding a 5'-phosphate and a 3'-hydroxyl group; requires a central core of homology in the junction. The consensus cleavage sequence is 5'-(A/T)TT(C/G)-3'. Cleavage occurs on the 3'-side of the TT dinucleotide at the point of strand exchange. HJ branch migration catalyzed by RuvA-RuvB allows RuvC to scan DNA until it finds its consensus sequence, where it cleaves and resolves the cruciform DNA. In Wolinella succinogenes (strain ATCC 29543 / DSM 1740 / CCUG 13145 / JCM 31913 / LMG 7466 / NCTC 11488 / FDC 602W) (Vibrio succinogenes), this protein is Crossover junction endodeoxyribonuclease RuvC.